The primary structure comprises 87 residues: Small ribosomal subunit protein bS20 (87 aa).

The interval 1-21 is disordered; it reads MANHKSAEKRARQTIKKTERN.

Belongs to the bacterial ribosomal protein bS20 family.

Its function is as follows. Binds directly to 16S ribosomal RNA. The polypeptide is Small ribosomal subunit protein bS20 (Campylobacter jejuni subsp. jejuni serotype O:23/36 (strain 81-176)).